A 58-amino-acid polypeptide reads, in one-letter code: Microcin J25 (58 aa).

The propeptide occupies 1–37 (MIKHFHFNKLSSGKKNNVPSPAKGVIQIKKSASQLTK). Residues 38 to 45 (GGAGHVPE) constitute a cross-link (isoglutamyl glycine isopeptide (Gly-Glu)).

Its subcellular location is the secreted. Peptide antibiotic that functions through inhibition of the bacterial DNA-dependent RNA polymerase (RNAP). Inhibits transcription by binding deep within RNAP secondary channel, where it sterically blocks the folding of the trigger loop, which is essential for efficient catalysis. In addition, it also seems to restrict access of nucleotide substrates to the catalytic center, and shows a partially competitive mode of inhibition with them. Exhibits potent bacteriocidal activity against a range of Enterobacteriaceae, including several pathogenic E.coli, Salmonella and Shigella strains. Also acts on the cytoplasmic membrane of Salmonella newport, producing alteration of membrane permeability and disruption of the subsequent gradient dissipation, which inhibits several processes essential for cell viability, such as oxygen consumption. Induces bacterial filamentation in susceptible cells in a non-SOS-dependent way, but this phenotype may result from impaired transcription of genes coding for cell division proteins. The sequence is that of Microcin J25 (mcjA) from Escherichia coli.